The following is a 309-amino-acid chain: Zinc transporter ZIP2 (309 aa).

Over 1-8 the chain is Extracellular; the sequence is MEQLLGIK. Residues 9–29 form a helical membrane-spanning segment; sequence LGCLFALLALTLGCGLTPICF. The Cytoplasmic segment spans residues 30-46; sequence KWFQIDAARGHHRLVLR. Residues 47–67 traverse the membrane as a helical segment; sequence LLGCISAGVFLGAGFMHMTAE. Over 68 to 103 the chain is Extracellular; sequence ALEEIESQIQKFMVQNRSASERNSSGDADSAHMEYP. A helical membrane pass occupies residues 104-124; it reads YGELIISLGFFFVFFLESLAL. The Cytoplasmic segment spans residues 125–164; that stretch reads QCCPGAAGGSTVQDEEWGGAHIFELHSHGHLPSPSKGPLR. A helical membrane pass occupies residues 165–185; the sequence is ALVLLLSLSFHSVFEGLAVGL. Zn(2+)-binding residues include His-175 and Glu-179. The Extracellular segment spans residues 186 to 189; the sequence is QPTV. A helical transmembrane segment spans residues 190 to 210; that stretch reads AATVQLCLAVLAHKGLVVFGV. His-202 lines the Zn(2+) pocket. The Cytoplasmic segment spans residues 211 to 224; it reads GMRLVHLGTSSRWA. A helical membrane pass occupies residues 225 to 245; that stretch reads VFSILLLALMSPLGLAVGLAV. Residues 246-258 lie on the Extracellular side of the membrane; the sequence is TGGDSEGGRGLAQ. Residues 259 to 279 traverse the membrane as a helical segment; the sequence is AVLEGVAAGTFLYVTFLEILP. Glu-276 is a Zn(2+) binding site. At 280–288 the chain is on the cytoplasmic side; that stretch reads RELASPEAP. The chain crosses the membrane as a helical span at residues 289 to 309; that stretch reads LAKWSCVAAGFAFMAFIALWA.

It belongs to the ZIP transporter (TC 2.A.5) family. Expressed only in prostate and uterine epithelial cells.

The protein localises to the cell membrane. It carries out the reaction Zn(2+)(in) = Zn(2+)(out). It catalyses the reaction Cd(2+)(in) = Cd(2+)(out). Its activity is regulated as follows. Activity is increased at acidic pH (6.5). Inhibited in the presence of high extracellular K(+). In terms of biological role, transporter for the divalent cation Zn(2+). Mediates the influx of Zn(2+) into cells from extracellular space. The Zn(2+) uniporter activity is independent of H(+)-driving force, but is modulated by extracellular pH and membrane potential. Also transports other divalent cations Zn(2+), Cd2(+), Cu2(+), Co2(+) in the order of decreasing affinity, respectively. In the skin, aids in the differentiation of keratinocytes in the epidermis. This Homo sapiens (Human) protein is Zinc transporter ZIP2.